Consider the following 76-residue polypeptide: Large ribosomal subunit protein eL20 (76 aa).

It belongs to the eukaryotic ribosomal protein eL20 family. In terms of assembly, part of the 50S ribosomal subunit. Binds 23S rRNA.

This chain is Large ribosomal subunit protein eL20, found in Methanocaldococcus jannaschii (strain ATCC 43067 / DSM 2661 / JAL-1 / JCM 10045 / NBRC 100440) (Methanococcus jannaschii).